The chain runs to 429 residues: Glutamate-1-semialdehyde 2,1-aminomutase 2 (429 aa).

An N6-(pyridoxal phosphate)lysine modification is found at Lys-268.

This sequence belongs to the class-III pyridoxal-phosphate-dependent aminotransferase family. HemL subfamily. In terms of assembly, homodimer. Requires pyridoxal 5'-phosphate as cofactor.

The protein resides in the cytoplasm. It catalyses the reaction (S)-4-amino-5-oxopentanoate = 5-aminolevulinate. The protein operates within porphyrin-containing compound metabolism; protoporphyrin-IX biosynthesis; 5-aminolevulinate from L-glutamyl-tRNA(Glu): step 2/2. The polypeptide is Glutamate-1-semialdehyde 2,1-aminomutase 2 (Listeria monocytogenes serotype 4a (strain HCC23)).